Consider the following 331-residue polypeptide: Ketol-acid reductoisomerase (NADP(+)) (331 aa).

The KARI N-terminal Rossmann domain occupies 2–182 (ARMYYDTDAN…GGTRAGILET (181 aa)). Residues 25–28 (YGSQ), serine 51, serine 53, and 83–86 (DEVQ) each bind NADP(+). Histidine 108 is a catalytic residue. Glycine 134 serves as a coordination point for NADP(+). The KARI C-terminal knotted domain occupies 183 to 328 (TFREETETDL…KDLRAMFSWL (146 aa)). Residues aspartate 191, glutamate 195, glutamate 227, and glutamate 231 each contribute to the Mg(2+) site. Serine 252 is a substrate binding site.

The protein belongs to the ketol-acid reductoisomerase family. The cofactor is Mg(2+).

It catalyses the reaction (2R)-2,3-dihydroxy-3-methylbutanoate + NADP(+) = (2S)-2-acetolactate + NADPH + H(+). The catalysed reaction is (2R,3R)-2,3-dihydroxy-3-methylpentanoate + NADP(+) = (S)-2-ethyl-2-hydroxy-3-oxobutanoate + NADPH + H(+). It participates in amino-acid biosynthesis; L-isoleucine biosynthesis; L-isoleucine from 2-oxobutanoate: step 2/4. It functions in the pathway amino-acid biosynthesis; L-valine biosynthesis; L-valine from pyruvate: step 2/4. Its function is as follows. Involved in the biosynthesis of branched-chain amino acids (BCAA). Catalyzes an alkyl-migration followed by a ketol-acid reduction of (S)-2-acetolactate (S2AL) to yield (R)-2,3-dihydroxy-isovalerate. In the isomerase reaction, S2AL is rearranged via a Mg-dependent methyl migration to produce 3-hydroxy-3-methyl-2-ketobutyrate (HMKB). In the reductase reaction, this 2-ketoacid undergoes a metal-dependent reduction by NADPH to yield (R)-2,3-dihydroxy-isovalerate. This is Ketol-acid reductoisomerase (NADP(+)) from Rippkaea orientalis (strain PCC 8801 / RF-1) (Cyanothece sp. (strain PCC 8801)).